The following is a 144-amino-acid chain: MIKFFLMVNKQGQTRLSKYYEHVDINKRALLETEVSKSCLSRSSEQCSFIEYKDFKLIYRQYAALFVVVGVNDTENEMAIYEFIHNFVEVLDGYFSRVSELDIMFNLDKVHIILDEMVLNGCIVETNRARILAPLLILDKLSES.

It belongs to the adaptor complexes small subunit family. In terms of assembly, adaptor protein complex 4 (AP-4) is a heterotetramer composed of two large adaptins (epsilon-type subunit AP4E1 and beta-type subunit AP4B1), a medium adaptin (mu-type subunit AP4M1) and a small adaptin (sigma-type AP4S1).

It localises to the golgi apparatus. The protein localises to the trans-Golgi network membrane. In terms of biological role, component of the adaptor protein complex 4 (AP-4). Adaptor protein complexes are vesicle coat components involved both in vesicle formation and cargo selection. They control the vesicular transport of proteins in different trafficking pathways. AP-4 forms a non clathrin-associated coat on vesicles departing the trans-Golgi network (TGN) and may be involved in the targeting of proteins from the trans-Golgi network (TGN) to the endosomal-lysosomal system. It is also involved in protein sorting to the basolateral membrane in epithelial cells and the proper asymmetric localization of somatodendritic proteins in neurons. AP-4 is involved in the recognition and binding of tyrosine-based sorting signals found in the cytoplasmic part of cargos, but may also recognize other types of sorting signal. This chain is AP-4 complex subunit sigma-1, found in Mus musculus (Mouse).